The primary structure comprises 669 residues: Protein fem-1 homolog A (669 aa).

7 ANK repeats span residues 2–31 (DLRT…REEL), 40–70 (GGGT…SVEA), 82–111 (EGAP…SVNR), 115–145 (TNST…DLEV), 149–178 (HGHT…QVNR), 182–211 (KGNT…RMER), and 214–243 (YGMT…GQEQ). The residue at position 108 (serine 108) is a Phosphoserine. Positions 240–278 (GQEQVAGGEAQPGLPQEDPSTSQGCAQPQGAPCCSSSPE) are disordered. 2 TPR repeats span residues 298–332 (VEAL…RHQG) and 390–423 (SYYI…QQSN). 2 ANK repeats span residues 534–576 (NGFT…DPDS) and 580–609 (DNNT…HMDA).

This sequence belongs to the fem-1 family. In terms of assembly, component of a CRL2 E3 ubiquitin-protein ligase complex, also named ECS (Elongin BC-CUL2/5-SOCS-box protein) complex, composed of CUL2, Elongin BC (ELOB and ELOC), RBX1 and substrate-specific adapter FEM1A. Interacts with PTGER4. Interacts with NFKB1; the interaction is direct. In terms of processing, phosphorylated; highly phosphorylated in myoblasts and myotubes. Phosphorylation at Ser-108 promotes PGE2-EP4-mediated inhibition of inflammation. Dephosphorylated by protein phosphatase 2A (PP2A). In terms of tissue distribution, present in macrophages derived from peripheral blood monocytes. Also present in atheromata (at protein level).

It localises to the mitochondrion. The protein resides in the cytoplasm. The protein operates within protein modification; protein ubiquitination. In terms of biological role, substrate-recognition component of a Cul2-RING (CRL2) E3 ubiquitin-protein ligase complex of the DesCEND (destruction via C-end degrons) pathway, which recognizes a C-degron located at the extreme C terminus of target proteins, leading to their ubiquitination and degradation. The C-degron recognized by the DesCEND pathway is usually a motif of less than ten residues and can be present in full-length proteins, truncated proteins or proteolytically cleaved forms. The CRL2(FEM1A) complex specifically recognizes proteins with an arginine at the C-terminus: recognizes and binds proteins ending with -Lys/Arg-Xaa-Arg and -Lys/Arg-Xaa-Xaa-Arg C-degrons, such as SIL1 or OR51B2, leading to their ubiquitination and degradation. Promotes ubiquitination and degradation of SLBP. Involved in PGE2-EP4-mediated inhibition of inflammation of macrophages via interaction with NFKB1 and PTGER4. Promotes inflammation in brain microglia through MAP2K4/MKK4-mediated signaling. This is Protein fem-1 homolog A from Homo sapiens (Human).